A 779-amino-acid polypeptide reads, in one-letter code: uncharacterized protein (779 aa).

[4Fe-4S] cluster-binding residues include cysteine 72 and cysteine 75.

The protein belongs to the prokaryotic molybdopterin-containing oxidoreductase family. It depends on [4Fe-4S] cluster as a cofactor. Mo-bis(molybdopterin guanine dinucleotide) is required as a cofactor.

This is an uncharacterized protein from Mycobacterium bovis (strain ATCC BAA-935 / AF2122/97).